A 300-amino-acid chain; its full sequence is Dioxygenase FUM3 (300 aa).

The Fe cation site is built by histidine 146, aspartate 148, and histidine 222.

The protein belongs to the PhyH family. As to quaternary structure, homodimer. It depends on Fe cation as a cofactor.

It participates in mycotoxin biosynthesis. Functionally, dioxygenase; part of the gene cluster that mediates the biosynthesis of fumonisins B1 (FB1), B2 (FB2), B3 (FB3), and B4 (FB4), which are carcinogenic mycotoxins. Within the pathway, FUM3 performs the C-5 hydroxylation present in FB1 and FB2 and which occurs late in the biosynthesis. The biosynthesis starts with the FUM1-catalyzed carbon chain assembly from one molecule of acetyl-CoA, eight molecules of malonyl-CoA, and two molecules of methionine (in S-adenosyl form). The C18 polyketide chain is released from the enzyme by a nucleophilic attack of a carbanion, which is derived from R-carbon of alanine by decarboxylation, on the carbonyl carbon of polyketide acyl chain. This step is catalyzed by the pyridoxal 5'-phosphate-dependent aminoacyl transferase FUM8. The resultant 3-keto intermediate is then stereospecifically reduced to a 3-hydroxyl product by reductase FUM13. Subsequent oxidations at C-10 by the cytochrome P450 monooxygenase FUM2, C-14 and C-15 by FUM6, FUM12 or FUM15, tricarballylic esterification of the hydroxyl groups on C-14 and C-15 by acyltransferase FUM14, and C-5 hydroxylation by 2-keto-glutarate-dependent dioxygenase FUM3 furnish the biosynthesis of fumonisins. The tricarballylic moieties are most likely derived from the citric acid cycle, and their addition to the carbon backbone may involve FUM7, FUM10, FUM11 and FUM14. In Gibberella moniliformis (strain M3125 / FGSC 7600) (Maize ear and stalk rot fungus), this protein is Dioxygenase FUM3.